Consider the following 346-residue polypeptide: N-acetyl-gamma-glutamyl-phosphate reductase (346 aa).

The active site involves cysteine 149.

Belongs to the NAGSA dehydrogenase family. Type 1 subfamily.

The protein resides in the cytoplasm. The catalysed reaction is N-acetyl-L-glutamate 5-semialdehyde + phosphate + NADP(+) = N-acetyl-L-glutamyl 5-phosphate + NADPH + H(+). Its pathway is amino-acid biosynthesis; L-arginine biosynthesis; N(2)-acetyl-L-ornithine from L-glutamate: step 3/4. Its function is as follows. Catalyzes the NADPH-dependent reduction of N-acetyl-5-glutamyl phosphate to yield N-acetyl-L-glutamate 5-semialdehyde. In Geotalea daltonii (strain DSM 22248 / JCM 15807 / FRC-32) (Geobacter daltonii), this protein is N-acetyl-gamma-glutamyl-phosphate reductase.